A 381-amino-acid chain; its full sequence is Succinyl-diaminopimelate desuccinylase (381 aa).

H69 is a Zn(2+) binding site. Residue D71 is part of the active site. D103 contacts Zn(2+). E137 acts as the Proton acceptor in catalysis. Residues E138, E166, and H355 each coordinate Zn(2+).

Belongs to the peptidase M20A family. DapE subfamily. In terms of assembly, homodimer. It depends on Zn(2+) as a cofactor. Co(2+) is required as a cofactor.

It catalyses the reaction N-succinyl-(2S,6S)-2,6-diaminopimelate + H2O = (2S,6S)-2,6-diaminopimelate + succinate. It participates in amino-acid biosynthesis; L-lysine biosynthesis via DAP pathway; LL-2,6-diaminopimelate from (S)-tetrahydrodipicolinate (succinylase route): step 3/3. Its function is as follows. Catalyzes the hydrolysis of N-succinyl-L,L-diaminopimelic acid (SDAP), forming succinate and LL-2,6-diaminopimelate (DAP), an intermediate involved in the bacterial biosynthesis of lysine and meso-diaminopimelic acid, an essential component of bacterial cell walls. This is Succinyl-diaminopimelate desuccinylase from Rickettsia rickettsii (strain Iowa).